Reading from the N-terminus, the 637-residue chain is 1-deoxy-D-xylulose-5-phosphate synthase (637 aa).

Thiamine diphosphate contacts are provided by residues His72 and 113–115 (GHA). Residue Asp144 participates in Mg(2+) binding. Thiamine diphosphate contacts are provided by residues 145 to 146 (GA), Asn174, Tyr287, and Glu370. Asn174 is a binding site for Mg(2+).

Belongs to the transketolase family. DXPS subfamily. In terms of assembly, homodimer. It depends on Mg(2+) as a cofactor. Thiamine diphosphate is required as a cofactor.

It carries out the reaction D-glyceraldehyde 3-phosphate + pyruvate + H(+) = 1-deoxy-D-xylulose 5-phosphate + CO2. Its pathway is metabolic intermediate biosynthesis; 1-deoxy-D-xylulose 5-phosphate biosynthesis; 1-deoxy-D-xylulose 5-phosphate from D-glyceraldehyde 3-phosphate and pyruvate: step 1/1. Functionally, catalyzes the acyloin condensation reaction between C atoms 2 and 3 of pyruvate and glyceraldehyde 3-phosphate to yield 1-deoxy-D-xylulose-5-phosphate (DXP). This chain is 1-deoxy-D-xylulose-5-phosphate synthase, found in Prochlorococcus marinus subsp. pastoris (strain CCMP1986 / NIES-2087 / MED4).